We begin with the raw amino-acid sequence, 103 residues long: MQANDITFFQRFQDDILAGRKTITIRDAAESHFKPGDVLRVGRYEDDGYFCTIAVTATSTVTLDTLTEQHAQQENMTLGQLRQVISDIYPGESQFYVIEFKTL.

The ASCH domain occupies 6-100 (ITFFQRFQDD…GESQFYVIEF (95 aa)). Catalysis depends on lysine 21, which acts as the Proton acceptor. Catalysis depends on threonine 24, which acts as the Nucleophile. Catalysis depends on glutamate 74, which acts as the Proton donor.

This sequence belongs to the N(4)-acetylcytidine amidohydrolase family.

It carries out the reaction N(4)-acetylcytidine + H2O = cytidine + acetate + H(+). The enzyme catalyses N(4)-acetyl-2'-deoxycytidine + H2O = 2'-deoxycytidine + acetate + H(+). It catalyses the reaction N(4)-acetylcytosine + H2O = cytosine + acetate + H(+). Functionally, catalyzes the hydrolysis of N(4)-acetylcytidine (ac4C). This Klebsiella pneumoniae subsp. pneumoniae (strain ATCC 700721 / MGH 78578) protein is N(4)-acetylcytidine amidohydrolase.